Consider the following 486-residue polypeptide: Galactose-1-phosphate uridylyltransferase (486 aa).

It belongs to the galactose-1-phosphate uridylyltransferase type 2 family.

The protein localises to the cytoplasm. The enzyme catalyses alpha-D-galactose 1-phosphate + UDP-alpha-D-glucose = alpha-D-glucose 1-phosphate + UDP-alpha-D-galactose. It participates in carbohydrate metabolism; galactose metabolism. The polypeptide is Galactose-1-phosphate uridylyltransferase (Pediococcus pentosaceus (strain ATCC 25745 / CCUG 21536 / LMG 10740 / 183-1w)).